Reading from the N-terminus, the 197-residue chain is Small ribosomal subunit protein uS4c (197 aa).

Residues 85-157 (MRLDNILFRL…LQLFTGKELA (73 aa)) enclose the S4 RNA-binding domain.

The protein belongs to the universal ribosomal protein uS4 family. In terms of assembly, part of the 30S ribosomal subunit. Contacts protein S5. The interaction surface between S4 and S5 is involved in control of translational fidelity.

It is found in the plastid. In terms of biological role, one of the primary rRNA binding proteins, it binds directly to 16S rRNA where it nucleates assembly of the body of the 30S subunit. Its function is as follows. With S5 and S12 plays an important role in translational accuracy. The chain is Small ribosomal subunit protein uS4c (rps4) from Cuscuta gronovii (Common dodder).